Reading from the N-terminus, the 580-residue chain is TRAF-type zinc finger domain-containing protein 1 (580 aa).

Residue alanine 2 is modified to N-acetylalanine. Residues 27–103 (IHEIHCQRNI…DLELSVVKLK (77 aa)) form a TRAF-type zinc finger. Residues serine 278, serine 320, serine 326, serine 327, serine 409, serine 415, serine 430, serine 450, serine 469, and serine 532 each carry the phosphoserine modification. 3 disordered regions span residues 395-453 (TANH…SPNR), 468-509 (PSGP…ASGH), and 524-580 (FAPS…EEEE). Residues 407 to 417 (QDSQPENTSAE) are compositionally biased toward polar residues.

As to quaternary structure, interacts with MAVS, TICAM1, TRAF1, TRAF2, TRAF3 and TRAF6. Expressed in skeletal muscle, brain, liver, kidney, spleen and bone marrow. Expression depends on STAT1.

Its function is as follows. Negative feedback regulator that controls excessive innate immune responses. Regulates both Toll-like receptor 4 (TLR4) and DDX58/RIG1-like helicases (RLH) pathways. May inhibit the LTR pathway by direct interaction with TRAF6 and attenuation of NF-kappa-B activation. May negatively regulate the RLH pathway downstream from MAVS and upstream of NF-kappa-B and IRF3. In Mus musculus (Mouse), this protein is TRAF-type zinc finger domain-containing protein 1 (Trafd1).